A 226-amino-acid polypeptide reads, in one-letter code: MRIDIITVVPDILKSPFEASILQRAIEKGLVEIHLHNLRDYTTDNYKQIDDYQFGGGAGMVMMIEPIDKCISELKSEREYNEVIYMTPDGATLNQKTANSLSLSENIIILCGHYKGVDQRVRDQFITKEISIGDYVLSGGELGAAVLCDSIIRLIPGVLGNETSALTDSFQDNLLAPPVYTRPSEYKGWEVPSILTSGNLPKIEEWRENQAYERTKKLRPDLLDDE.

S-adenosyl-L-methionine-binding positions include Gly112 and Ile132–Leu137.

Belongs to the RNA methyltransferase TrmD family. Homodimer.

It localises to the cytoplasm. It catalyses the reaction guanosine(37) in tRNA + S-adenosyl-L-methionine = N(1)-methylguanosine(37) in tRNA + S-adenosyl-L-homocysteine + H(+). In terms of biological role, specifically methylates guanosine-37 in various tRNAs. This Christiangramia forsetii (strain DSM 17595 / CGMCC 1.15422 / KT0803) (Gramella forsetii) protein is tRNA (guanine-N(1)-)-methyltransferase.